A 904-amino-acid polypeptide reads, in one-letter code: Eukaryotic translation initiation factor 3 subunit C (904 aa).

Disordered stretches follow at residues 1-38 (MSRFFAGGSESDSDSSSDSEPIQRQTAPQFTFSDEEED) and 156-290 (FRES…TSEK). The segment covering 22–32 (IQRQTAPQFTF) has biased composition (polar residues). Acidic residues predominate over residues 161–183 (DAADDEDEEEEKKEEEESDDEEA). The segment covering 194–206 (FKKDTVEKVKVEK) has biased composition (basic and acidic residues). The span at 207-232 (DDDDSDDSIDWGQDSDSDESSSEEEA) shows a compositional bias: acidic residues. The span at 237–247 (IRERFLKRPEK) shows a compositional bias: basic and acidic residues. The segment covering 257 to 272 (KEKKKTKETKDSRKKK) has biased composition (basic residues). The PCI domain occupies 636-812 (FHMHINLELL…ETVVLHRSEP (177 aa)). Residues 847-904 (RGGNQGYNRDRQNYRNQNQNRENWNNNRRQDRGNRNRNQNRDREQREQHRVEFEEKAE) form a disordered region. A compositionally biased stretch (low complexity) spans 860–873 (YRNQNQNRENWNNN). Positions 874 to 904 (RRQDRGNRNRNQNRDREQREQHRVEFEEKAE) are enriched in basic and acidic residues.

It belongs to the eIF-3 subunit C family. In terms of assembly, component of the eukaryotic translation initiation factor 3 (eIF-3) complex.

The protein localises to the cytoplasm. Functionally, component of the eukaryotic translation initiation factor 3 (eIF-3) complex, which is involved in protein synthesis of a specialized repertoire of mRNAs and, together with other initiation factors, stimulates binding of mRNA and methionyl-tRNAi to the 40S ribosome. The eIF-3 complex specifically targets and initiates translation of a subset of mRNAs involved in cell proliferation. The sequence is that of Eukaryotic translation initiation factor 3 subunit C from Culex quinquefasciatus (Southern house mosquito).